Here is a 155-residue protein sequence, read N- to C-terminus: Putative pre-16S rRNA nuclease (155 aa).

The protein belongs to the YqgF nuclease family.

The protein localises to the cytoplasm. Could be a nuclease involved in processing of the 5'-end of pre-16S rRNA. The chain is Putative pre-16S rRNA nuclease from Xanthomonas euvesicatoria pv. vesicatoria (strain 85-10) (Xanthomonas campestris pv. vesicatoria).